The chain runs to 776 residues: K(+) efflux antiporter 3, chloroplastic (776 aa).

A chloroplast-targeting transit peptide spans 1 to 72; sequence MAISTMLGSI…KVFLDTSKRF (72 aa). Residues 73–93 are Lumenal, thylakoid-facing; it reads YFQGRWSESSGRRVETYAGVD. A helical transmembrane segment spans residues 94 to 114; the sequence is VASAVDVINDLGFDTLTFLMV. Thr115 is a topological domain (stromal). The helical transmembrane segment at 116 to 136 threads the bilayer; sequence VIIVPAFRILKASPILGFFFA. The Lumenal, thylakoid portion of the chain corresponds to 137 to 153; that stretch reads GVVLNQFGLIRNLTDVK. The helical transmembrane segment at 154–174 threads the bilayer; sequence VLSEWGILFLLFEMGLELSLA. Residues 175-181 are Stromal-facing; sequence RLKALAK. A helical transmembrane segment spans residues 182-202; sequence FAFGMGLTQVLLCTAAFTAFE. The Lumenal, thylakoid segment spans residues 203–232; the sequence is LPPNGAIGTKILEFLFHSRPDLVNIRSIDE. The chain crosses the membrane as a helical span at residues 233–253; that stretch reads AVVIGAALSLSSSAFVLQLLA. Residues 254-266 are Stromal-facing; the sequence is EKGELPTRFGSAT. A helical transmembrane segment spans residues 267-287; sequence LGILLLQDIAVVPLLVILPVL. Over 288-296 the chain is Lumenal, thylakoid; sequence ESQDIGGES. A helical membrane pass occupies residues 297–317; that stretch reads IWPMLAKESAKALGGLGILSL. Residues 318–338 are Stromal-facing; the sequence is GGKFFLRRIFEVVAETRSSEA. Residues 339-359 form a helical membrane-spanning segment; that stretch reads FVALCLLTVAGTSLVTQWLGF. At 360-389 the chain is on the lumenal, thylakoid side; that stretch reads SDTLGAFLAGALLAETNFRTQIEADIRPFR. The helical transmembrane segment at 390-410 threads the bilayer; sequence GLLLGLFFVTTGTSIDMEVLF. The Stromal portion of the chain corresponds to 411 to 415; that stretch reads REWPN. Residues 416-436 form a helical membrane-spanning segment; that stretch reads VLSLLGGLIVIKTLIITAIGP. Residues 437–445 lie on the Lumenal, thylakoid side of the membrane; that stretch reads RVGLTIQES. The helical transmembrane segment at 446–466 threads the bilayer; sequence VRVGFLLSQGGEFAFVVFSLA. The Stromal portion of the chain corresponds to 467–468; the sequence is NR. A helical membrane pass occupies residues 469-489; it reads LGVLPNELNKLLIIVVVLSMA. The Lumenal, thylakoid segment spans residues 490 to 526; it reads LTPYLNQLGRKAADFLDERLDPGEKIGEDVNFDVSES. Residues 524-649 form the RCK N-terminal domain; the sequence is SESIVIIGFG…KKAGATDAIL (126 aa). Residues 527–547 traverse the membrane as a helical segment; sequence IVIIGFGQMGQVLANFLSTPL. At 548-776 the chain is on the stromal side; that stretch reads VSDSDLVGWP…FVGKADKAQD (229 aa). Residues 728–776 form a disordered region; it reads MQMKASDSNSDSAAEILQETAGLSQPPEIDDSSVNIDNGFVGKADKAQD.

It belongs to the monovalent cation:proton antiporter 2 (CPA2) transporter (TC 2.A.37) family. KEA (TC 2.A.37.1) subfamily. Expressed at low levels in flowers, siliques and leaves. As to expression, expressed at low levels in flowers and leaves. In terms of tissue distribution, most abundant splice form in all organs, including siliques, flowers, leaves and roots. Preferentially expressed in photosynthetically active tissues, including seedling cotyledons and mature leaves. Expressed in shoots and roots.

The protein localises to the plastid. It is found in the chloroplast membrane. The protein resides in the golgi apparatus membrane. It localises to the chloroplast thylakoid membrane. It carries out the reaction K(+)(in) + H(+)(out) = K(+)(out) + H(+)(in). Regulated by a mechanism involving lumenal C-terminus region; a fine-tuned balance between photoprotective energy dissipation in high light and a maximum quantum yield in low light involves a reduced activity under high light. In terms of biological role, electroneutral K(+)/H(+) efflux antiporter assuring proton efflux from the thylakoid lumen to the plastid stroma, thus increasing the membrane potential at the expense of the proton gradient (delta pH) component of the proton motive force (PMF). Promotes photosynthesis and growth in conditions where the chloroplast (cp)ATP synthase activity is low (e.g. cgl160 mutant background) by reducing the pH gradient across the thylakoid membrane. Accelerates photosynthetic acclimation in fluctuating light environments by modulating two components of the proton motive force, the proton gradient and the electric potential (delta Psi). Promotes the relaxation of photoprotective energy-dependent non-photochemical quenching (NPQ) after transitions from high to low light, thus enhancing photosystem II (PSII) quantum efficiency in fluctuating light. On transition from high to low light, slows down photoprotection by dissipating the pH gradient across the thylakoid membrane. During photosynthetic response on transition from dark to low light, involved in a sequential mechanism of adaptation; VCCN1 and CLCe first trigger the activation of photoprotection, which is later down-regulated by KEA3 to a low steady state, while adjusting electron transport. Together with the chloroplast NADH dehydrogenase-like (NDH) complex, maximizes photosynthesis efficiency after a long dark adaptation. Required in roots for rapid hyperosmotic-induced Ca(2+) responses and for osmo-sensory potentiation in hyperosmotic conditions. Low K(+)/H(+) efflux antiporter activity. Its function is as follows. Low K(+)/H(+) efflux antiporter activity. Promotes non-photochemical quenching (NPQ) in high light conditions. The sequence is that of K(+) efflux antiporter 3, chloroplastic from Arabidopsis thaliana (Mouse-ear cress).